We begin with the raw amino-acid sequence, 196 residues long: Protein GrpE (196 aa).

The tract at residues 1–40 is disordered; the sequence is MSSKEQKTPEGQAPEEIIMDQHEEVEAVEPNDSAEQVDPR.

The protein belongs to the GrpE family. As to quaternary structure, homodimer.

It localises to the cytoplasm. Its function is as follows. Participates actively in the response to hyperosmotic and heat shock by preventing the aggregation of stress-denatured proteins, in association with DnaK and GrpE. It is the nucleotide exchange factor for DnaK and may function as a thermosensor. Unfolded proteins bind initially to DnaJ; upon interaction with the DnaJ-bound protein, DnaK hydrolyzes its bound ATP, resulting in the formation of a stable complex. GrpE releases ADP from DnaK; ATP binding to DnaK triggers the release of the substrate protein, thus completing the reaction cycle. Several rounds of ATP-dependent interactions between DnaJ, DnaK and GrpE are required for fully efficient folding. The chain is Protein GrpE from Salmonella enteritidis PT4 (strain P125109).